A 304-amino-acid polypeptide reads, in one-letter code: tRNA pseudouridine synthase B (304 aa).

Asp-38 acts as the Nucleophile in catalysis.

The protein belongs to the pseudouridine synthase TruB family. Type 1 subfamily.

The catalysed reaction is uridine(55) in tRNA = pseudouridine(55) in tRNA. Its function is as follows. Responsible for synthesis of pseudouridine from uracil-55 in the psi GC loop of transfer RNAs. This chain is tRNA pseudouridine synthase B, found in Listeria innocua serovar 6a (strain ATCC BAA-680 / CLIP 11262).